The following is a 305-amino-acid chain: D-alanine--D-alanine ligase (305 aa).

Residues 104-300 (RALFASAGIP…FPELVRWMVE (197 aa)) form the ATP-grasp domain. 131–181 (LPRPFVVKPLNEGSSVGVFIVRDNQPSPLPDWPFDADEVLVESFIPGRELT) provides a ligand contact to ATP. Positions 249, 267, and 269 each coordinate Mg(2+).

It belongs to the D-alanine--D-alanine ligase family. The cofactor is Mg(2+). Mn(2+) serves as cofactor.

The protein localises to the cytoplasm. The catalysed reaction is 2 D-alanine + ATP = D-alanyl-D-alanine + ADP + phosphate + H(+). Its pathway is cell wall biogenesis; peptidoglycan biosynthesis. Functionally, cell wall formation. The polypeptide is D-alanine--D-alanine ligase (Paramagnetospirillum magneticum (strain ATCC 700264 / AMB-1) (Magnetospirillum magneticum)).